Reading from the N-terminus, the 617-residue chain is Lipoteichoic acid synthase-like YvgJ (617 aa).

The Cytoplasmic portion of the chain corresponds to 1-10; the sequence is MKGTFFHNQR. A helical transmembrane segment spans residues 11 to 31; the sequence is FLCFSILFMWIKTYVIYKLGF. The Extracellular segment spans residues 32-41; that stretch reads DLQIDTLLEE. The helical transmembrane segment at 42–62 threads the bilayer; the sequence is LMLLVNPLSFILPLFGIGLFL. At 63–68 the chain is on the cytoplasmic side; the sequence is KENKQR. A helical transmembrane segment spans residues 69 to 89; it reads AFLLIANLVLTVILISNTIFY. The Extracellular portion of the chain corresponds to 90 to 115; that stretch reads GFYIDFITIPVLFQASNMSDMGSSVK. Residues 116-136 form a helical membrane-spanning segment; the sequence is ELFHPLFIALFVDLVFLLLFA. The Cytoplasmic segment spans residues 137 to 153; it reads RKTKHPQTKAAPHTIKR. Residues 154-171 traverse the membrane as a helical segment; the sequence is YYAASCGMLLCTLALAEV. The Extracellular portion of the chain corresponds to 172-617; the sequence is QQPKLLAHSF…LNGDLLRFSE (446 aa). The Mn(2+) site is built by Glu-251 and Thr-293. Thr-293 is a catalytic residue. His-408 serves as a coordination point for substrate. Residues Asp-467 and His-468 each coordinate Mn(2+).

It belongs to the LTA synthase family. Proteolytically cleaved.

It is found in the cell membrane. The protein localises to the secreted. The chain is Lipoteichoic acid synthase-like YvgJ (yvgJ) from Bacillus subtilis (strain 168).